Consider the following 433-residue polypeptide: Adenylyltransferase and sulfurtransferase UBA4 (433 aa).

Residues glycine 70, aspartate 91, 98 to 102 (SNLHR), lysine 115, and 159 to 160 (DT) each bind ATP. Cysteine 201 and cysteine 204 together coordinate Zn(2+). Cysteine 218 serves as the catalytic Glycyl thioester intermediate; for adenylyltransferase activity. Residues cysteine 279 and cysteine 282 each coordinate Zn(2+). The Rhodanese domain occupies 332-431 (SGNNKVLLDV…YIDDVDQSIP (100 aa)). The Cysteine persulfide intermediate; for sulfurtransferase activity role is filled by cysteine 390.

The protein in the N-terminal section; belongs to the HesA/MoeB/ThiF family. UBA4 subfamily. It depends on Zn(2+) as a cofactor.

It is found in the cytoplasm. The protein resides in the cytosol. It functions in the pathway tRNA modification; 5-methoxycarbonylmethyl-2-thiouridine-tRNA biosynthesis. Plays a central role in 2-thiolation of mcm(5)S(2)U at tRNA wobble positions of cytosolic tRNA(Lys), tRNA(Glu) and tRNA(Gln). Acts by mediating the C-terminal thiocarboxylation of sulfur carrier URM1. Its N-terminus first activates URM1 as acyl-adenylate (-COAMP), then the persulfide sulfur on the catalytic cysteine is transferred to URM1 to form thiocarboxylation (-COSH) of its C-terminus. The reaction probably involves hydrogen sulfide that is generated from the persulfide intermediate and that acts as a nucleophile towards URM1. Subsequently, a transient disulfide bond is formed. Does not use thiosulfate as sulfur donor; NFS1 probably acting as a sulfur donor for thiocarboxylation reactions. Prior mcm(5) tRNA modification by the elongator complex is required for 2-thiolation. May also be involved in protein urmylation. This Candida glabrata (strain ATCC 2001 / BCRC 20586 / JCM 3761 / NBRC 0622 / NRRL Y-65 / CBS 138) (Yeast) protein is Adenylyltransferase and sulfurtransferase UBA4.